The primary structure comprises 354 residues: Putative ankyrin repeat protein L284 (354 aa).

ANK repeat units lie at residues 201 to 230 (ILDD…LSND), 253 to 284 (SRYP…NPIV), and 286 to 314 (LHKA…DIDI).

This Acanthamoeba polyphaga (Amoeba) protein is Putative ankyrin repeat protein L284.